Consider the following 232-residue polypeptide: Probable ADP-ribosylation factor GTPase-activating protein AGD15 (232 aa).

The Arf-GAP domain maps to 16–130 (SKILEALLKH…RWVSPGAIQP (115 aa)). Residues 31 to 54 (CADCRSKAPRWASVNLGIFICMQC) form a C4-type zinc finger. Residues 203–232 (PNQKNENFSSEVNQNRRTTIAPPSSWATFD) are disordered. Over residues 206-232 (KNENFSSEVNQNRRTTIAPPSSWATFD) the composition is skewed to polar residues.

Its function is as follows. GTPase-activating protein (GAP) for ADP ribosylation factor (ARF). The protein is Probable ADP-ribosylation factor GTPase-activating protein AGD15 (AGD15) of Arabidopsis thaliana (Mouse-ear cress).